Here is a 420-residue protein sequence, read N- to C-terminus: Probable aminotransferase aclI (420 aa).

Lys-264 is modified (N6-(pyridoxal phosphate)lysine).

The protein belongs to the class-I pyridoxal-phosphate-dependent aminotransferase family. It depends on pyridoxal 5'-phosphate as a cofactor.

Its pathway is mycotoxin biosynthesis. Its function is as follows. Probable aminotransferase; part of the gene cluster that mediates the biosynthesis of aspirochlorine (or antibiotic A30641), an unusual halogenated spiro compound with distinctive antifungal properties due to selective inhibition of protein biosynthesis, and which is also active against bacteria, viruses, and murine tumor cells. The non-ribosomal peptide synthetase (NRPS) aclP is responsible the formation of the diketopiperazine (DKP) core from the condensation of 2 phenylalanine residues. One Phe residue is tailored into chlorotyrosine by hydroxylation and chlorination, whereas the second Phe undergoes an unprecedented C-C bond cleavage to be converted into glycine. After formation of the DKP, sulfur is incorporated into the DKP by conjugation with glutathione by aclG, followed by its stepwise degradation to the thiol by aclI, aclJ and aclK, and the dithiol oxidation by aclT. In addition, oxygenases (aclB, aclC, aclL and aclO) and O-methyltransferases (aclM and aclU) act as tailoring enzymes to produce the intermediate dechloroaspirochlorine. Ultimately, chlorination of dechloroaspirochlorine by the halogenase aclH is the last step in the aspirochlorine pathway. The protein is Probable aminotransferase aclI of Aspergillus oryzae (strain ATCC 42149 / RIB 40) (Yellow koji mold).